Consider the following 206-residue polypeptide: Flavin prenyltransferase UbiX (206 aa).

Residues 14 to 16 (GAS), Thr40, 101 to 104 (SMGT), and Arg136 each bind FMN. The dimethylallyl phosphate site is built by Tyr166 and Lys182.

This sequence belongs to the UbiX/PAD1 family.

The catalysed reaction is dimethylallyl phosphate + FMNH2 = prenylated FMNH2 + phosphate. In terms of biological role, flavin prenyltransferase that catalyzes the synthesis of the prenylated FMN cofactor (prenyl-FMN) for 4-hydroxy-3-polyprenylbenzoic acid decarboxylase UbiD. The prenyltransferase is metal-independent and links a dimethylallyl moiety from dimethylallyl monophosphate (DMAP) to the flavin N5 and C6 atoms of FMN. This chain is Flavin prenyltransferase UbiX, found in Halalkalibacterium halodurans (strain ATCC BAA-125 / DSM 18197 / FERM 7344 / JCM 9153 / C-125) (Bacillus halodurans).